We begin with the raw amino-acid sequence, 106 residues long: MPFFDVQKRLGVDLDRWMTIQSAEQPHKIPSRCHAFEKEWIECAHGIGSIRAEKECKIEFEDFRECLLRQKTMKRLHAIRRQREKLIKEGKYTPPPHHSGQEEPRS.

Residues 30-74 (PSRCHAFEKEWIECAHGIGSIRAEKECKIEFEDFRECLLRQKTMK) form the CHCH domain. 2 consecutive short sequence motifs (cx9C motif) follow at residues 33–43 (CHAFEKEWIEC) and 56–66 (CKIEFEDFREC). 2 disulfides stabilise this stretch: Cys-33-Cys-66 and Cys-43-Cys-56. Positions 84–106 (EKLIKEGKYTPPPHHSGQEEPRS) are disordered.

The protein belongs to the complex I NDUFS5 subunit family. Mammalian complex I is composed of 45 different subunits. This is a component of the iron-sulfur (IP) fragment of the enzyme.

It localises to the mitochondrion inner membrane. Its subcellular location is the mitochondrion intermembrane space. In terms of biological role, accessory subunit of the mitochondrial membrane respiratory chain NADH dehydrogenase (Complex I), that is believed not to be involved in catalysis. Complex I functions in the transfer of electrons from NADH to the respiratory chain. The immediate electron acceptor for the enzyme is believed to be ubiquinone. This chain is NADH dehydrogenase [ubiquinone] iron-sulfur protein 5 (NDUFS5), found in Bos taurus (Bovine).